Here is a 98-residue protein sequence, read N- to C-terminus: RNA-binding protein Hfq (98 aa).

Residues 11–71 (DVFLNHVRRS…ISTVMPATPV (61 aa)) form the Sm domain.

It belongs to the Hfq family. As to quaternary structure, homohexamer.

In terms of biological role, RNA chaperone that binds small regulatory RNA (sRNAs) and mRNAs to facilitate mRNA translational regulation in response to envelope stress, environmental stress and changes in metabolite concentrations. Also binds with high specificity to tRNAs. The polypeptide is RNA-binding protein Hfq (Gluconacetobacter diazotrophicus (strain ATCC 49037 / DSM 5601 / CCUG 37298 / CIP 103539 / LMG 7603 / PAl5)).